A 3295-amino-acid polypeptide reads, in one-letter code: Toxin CdiA (3295 aa).

The interval 33-366 is two-partner system transport domain (TPS); that stretch reads PSSGVGHTQR…GKGNTQLTTA (334 aa). The helical transmembrane segment at 55–75 threads the bilayer; that stretch reads LLIALGCISLSAQAAIVADGS. The segment at 353–1574 is FHA-1; the sequence is GVLYGKGNTQ…LLVYAKTLTN (1222 aa). The tract at residues 1165–1185 is disordered; it reads PPSSIPPSSTQSSSTQASASP. Positions 1575–1796 are receptor binding domain (RBD); that stretch reads RRQILTATTD…LKTDKGDYAP (222 aa). Residues 1797–1977 are YP domain; it reads GPEAALSLAN…GVKPGDLRAN (181 aa). A disordered region spans residues 1806–1831; that stretch reads NISPPSSLDATGPRGVPPPSDDLNRT. The periplasmic FHA-1 repeat (pFR) stretch occupies residues 1998–2035; that stretch reads GAISASNNLQISMAKDITLNNRCGLLQAGNHLQLSTLN. Residues 2022 to 2676 are FHA-2; that stretch reads LLQAGNHLQL…DRDNYDAKQS (655 aa). Disordered regions lie at residues 2260–2292 and 2823–2847; these read TSQT…EGRS and QQNV…FDKE. Residues 2823 to 2838 show a composition bias toward polar residues; that stretch reads QQNVDDLSRDTGNANG. The VENN CT cleavage motif signature appears at 3073 to 3076; the sequence is VENN. Positions 3073–3295 are CT domain; that stretch reads VENNLLGGNE…QKKDAMEDSK (223 aa). A disordered region spans residues 3276–3295; the sequence is SSEFGSSLIQQKKDAMEDSK. Positions 3286-3295 are enriched in basic and acidic residues; the sequence is QKKDAMEDSK.

The protein in the N-terminal section; belongs to the CdiA toxin family. As to quaternary structure, probably interacts with cognate immunity protein CdiI.

The protein localises to the membrane. It localises to the target cell. The protein resides in the target cell cytoplasm. Toxic component of a toxin-immunity protein module, which functions as a cellular contact-dependent growth inhibition (CDI) system. CDI modules allow bacteria to communicate with and inhibit the growth of closely related neighboring bacteria in a contact-dependent fashion. CDI is neutralized by its cognate immunity protein CdiI, but not by non-cognate CdiI from other bacteria. Functionally, the CdiA protein is thought to be exported from the cell through the central lumen of CdiB, the other half of its two-partner system (TPS). The TPS domain probably remains associated with CdiB while the FHA-1 domain forms an extended filament with the receptor-binding domain (RBD) at its extremity; in the secretion arrested state the C-terminus of the RBD and YP domains form a hairpin-like structure as the FHA-2, PT and CT domains are periplasmic. The YP domain is probably responsible for this arrest at the point where it re-enters the host cell periplasm. Upon binding to a target cell outer membrane receptor a signal is transmitted to activate secretion. The filament elongates slightly, the rest of CdiA is secreted and the FHA-2 domain becomes stably associated with the target cell's outer membrane where it facilitates entry of the toxic CT domain into the target cell periplasm. From there the toxic CT domain is cleaved and gains access to the target cell cytoplasm via an inner membrane protein. In Yersinia pestis, this protein is Toxin CdiA.